A 389-amino-acid polypeptide reads, in one-letter code: Flagellar P-ring protein (389 aa).

Positions 1-33 are cleaved as a signal peptide; the sequence is MRPLVAARRRAAACCALAACMLALAFAPAAARA.

It belongs to the FlgI family. The basal body constitutes a major portion of the flagellar organelle and consists of four rings (L,P,S, and M) mounted on a central rod.

It is found in the periplasm. The protein localises to the bacterial flagellum basal body. Functionally, assembles around the rod to form the L-ring and probably protects the motor/basal body from shearing forces during rotation. The chain is Flagellar P-ring protein from Burkholderia pseudomallei (strain K96243).